Here is a 487-residue protein sequence, read N- to C-terminus: NADH-quinone oxidoreductase subunit N (487 aa).

13 consecutive transmembrane segments (helical) span residues 7-27 (ILGP…LLMV), 38-58 (LVGL…GLGA), 79-99 (YAKA…MVWL), 111-131 (ILVL…DLIA), 164-184 (FVLG…VYGF), 207-227 (LLIG…AVPF), 238-258 (APTP…LTLF), 276-296 (VIIL…IVQT), 301-321 (LMAY…AAGT), 328-348 (VLVY…VILA), 373-393 (AAAM…AGFF), 406-426 (GLFA…FYYL), and 451-471 (VILI…SVVV).

It belongs to the complex I subunit 2 family. In terms of assembly, NDH-1 is composed of 14 different subunits. Subunits NuoA, H, J, K, L, M, N constitute the membrane sector of the complex.

The protein resides in the cell inner membrane. It carries out the reaction a quinone + NADH + 5 H(+)(in) = a quinol + NAD(+) + 4 H(+)(out). NDH-1 shuttles electrons from NADH, via FMN and iron-sulfur (Fe-S) centers, to quinones in the respiratory chain. The immediate electron acceptor for the enzyme in this species is believed to be ubiquinone. Couples the redox reaction to proton translocation (for every two electrons transferred, four hydrogen ions are translocated across the cytoplasmic membrane), and thus conserves the redox energy in a proton gradient. The chain is NADH-quinone oxidoreductase subunit N from Rhodospirillum rubrum (strain ATCC 11170 / ATH 1.1.1 / DSM 467 / LMG 4362 / NCIMB 8255 / S1).